The primary structure comprises 514 residues: Exoglucanase 1 (514 aa).

Positions 1 to 17 are cleaved as a signal peptide; that stretch reads MYRKLAVISAFLATARA. The residue at position 18 (Gln-18) is a Pyrrolidone carboxylic acid. A catalytic region spans residues 18 to 453; the sequence is QSACTLQSET…GSTGNPSGGN (436 aa). 10 disulfide bridges follow: Cys-21/Cys-89, Cys-36/Cys-42, Cys-67/Cys-88, Cys-78/Cys-84, Cys-155/Cys-414, Cys-189/Cys-227, Cys-193/Cys-226, Cys-247/Cys-273, Cys-255/Cys-260, and Cys-278/Cys-348. An N-linked (GlcNAc) asparagine glycan is attached at Asn-62. The Nucleophile role is filled by Glu-229. Glu-234 acts as the Proton donor/acceptor in catalysis. Asn-287 carries N-linked (GlcNAc...) (high mannose) asparagine glycosylation. N-linked (GlcNAc) asparagine glycosylation is present at Asn-401. The segment covering 401–437 has biased composition (polar residues); that stretch reads NETSSTPGAVRGSCSTSSGVPAQVESQSPNAKVTFSN. The tract at residues 401–481 is disordered; it reads NETSSTPGAV…TGSSPGPTQS (81 aa). The linker stretch occupies residues 454–478; the sequence is PPGGNPPGTTTTRRPATTTGSSPGP. The span at 460 to 479 shows a compositional bias: low complexity; it reads PGTTTTRRPATTTGSSPGPT. O-linked (Man) threonine glycosylation is present at Thr-462. O-linked (Man...) threonine glycans are attached at residues Thr-463, Thr-464, and Thr-465. The O-linked (Man) threonine glycan is linked to Thr-470. Thr-471 and Thr-472 each carry an O-linked (Man...) threonine glycan. Residues Ser-474 and Ser-475 are each glycosylated (O-linked (Man) serine). The CBM1 domain maps to 478 to 514; it reads PTQSHYGQCGGIGYSGPTVCASGTTCQVLNPYYSQCL. A glycan (O-linked (Man) threonine) is linked at Thr-479. O-linked (Man) serine glycans are attached at residues Ser-481 and Ser-492. Intrachain disulfides connect Cys-486-Cys-503 and Cys-497-Cys-513.

Belongs to the glycosyl hydrolase 7 (cellulase C) family. Post-translationally, N-glycosylated. A high mannose glycan is attached to Asn-287 (predominantly Man(8)GlcNAc(2)) and single GlcNAc occupancy is observed at Asn-62 and Asn-401 with some site heterogeneity depending on strains and fermentation conditions. In terms of processing, O-glycosylated. Within the linker domain, all 8 threonines are variably glycosylated with between at least one, and up to three, mannose residues per site. All serines in this domain are at least partially glycosylated with a single mannose residue. O-glycosylation of the cellulase linker provides protection from proteolysis. Linker glycans also contribute to binding affinity of cellobiohydrolases to cellulose.

The protein localises to the secreted. The enzyme catalyses Hydrolysis of (1-&gt;4)-beta-D-glucosidic linkages in cellulose and cellotetraose, releasing cellobiose from the non-reducing ends of the chains.. Its function is as follows. Exocellobiohydrolases (CBH) that catalyzes the hydrolysis of 1,4-beta-D-glucosidic bonds in cellulose to release the disaccharide cellobiose. The degradation of cellulose involves an interplay between different cellulolytic enzymes. Hydrolysis starts with endoglucanases (EGs), which cut internal beta-1,4-glucosidic bonds in cellulose to reduce the polymerization degree of the substrate and create new chain ends for exocellobiohydrolases (CBHs). The CBHs release the disaccharide cellobiose from the non-reducing end of the cellulose polymer chain. Finally, beta-1,4-glucosidases hydrolyze the cellobiose and other short cello-oligosaccharides into glucose units. This Hypocrea jecorina (strain ATCC 56765 / BCRC 32924 / NRRL 11460 / Rut C-30) (Trichoderma reesei) protein is Exoglucanase 1 (cbh1).